Consider the following 345-residue polypeptide: 2-oxoglutarate and iron-dependent oxygenase domain-containing protein 2 (345 aa).

One can recognise a Fe2OG dioxygenase domain in the interval D207–A301. Residues H227, D229, and H282 each contribute to the Fe cation site. Residue R292 coordinates 2-oxoglutarate.

It belongs to the OGFOD2 family. The cofactor is Fe(2+). L-ascorbate is required as a cofactor.

The chain is 2-oxoglutarate and iron-dependent oxygenase domain-containing protein 2 (ogfod2) from Danio rerio (Zebrafish).